Reading from the N-terminus, the 358-residue chain is Ornithine cyclodeaminase (358 aa).

Residues Arg52 and Lys76 each contribute to the L-ornithine site. Residues Thr91, Arg119, 146–147, Asp168, Thr208, 231–234, Lys238, and Ser299 contribute to the NAD(+) site; these read AQ and VGGD. Arg119 contributes to the L-ornithine binding site. Asp234 provides a ligand contact to L-ornithine. Asp234 (proton donor/acceptor) is an active-site residue. Val300 serves as a coordination point for L-ornithine.

This sequence belongs to the ornithine cyclodeaminase/mu-crystallin family. NAD(+) serves as cofactor.

The catalysed reaction is L-ornithine = L-proline + NH4(+). It participates in amino-acid biosynthesis; L-proline biosynthesis; L-proline from L-ornithine: step 1/1. Catalyzes the conversion of L-ornithine into L-proline with release of ammonia. This Brucella suis biovar 1 (strain 1330) protein is Ornithine cyclodeaminase.